A 499-amino-acid polypeptide reads, in one-letter code: Glycerol kinase (499 aa).

An ADP-binding site is contributed by Thr13. Positions 13, 14, and 15 each coordinate ATP. Residue Thr13 participates in sn-glycerol 3-phosphate binding. Residue Arg17 coordinates ADP. Sn-glycerol 3-phosphate-binding residues include Arg83, Glu84, Tyr135, and Asp245. Glycerol is bound by residues Arg83, Glu84, Tyr135, Asp245, and Gln246. ADP-binding residues include Thr267 and Gly310. 4 residues coordinate ATP: Thr267, Gly310, Gln314, and Ala411. Ala411 and Asn415 together coordinate ADP.

This sequence belongs to the FGGY kinase family.

It catalyses the reaction glycerol + ATP = sn-glycerol 3-phosphate + ADP + H(+). It participates in polyol metabolism; glycerol degradation via glycerol kinase pathway; sn-glycerol 3-phosphate from glycerol: step 1/1. Inhibited by fructose 1,6-bisphosphate (FBP). Functionally, key enzyme in the regulation of glycerol uptake and metabolism. Catalyzes the phosphorylation of glycerol to yield sn-glycerol 3-phosphate. The chain is Glycerol kinase from Xylella fastidiosa (strain M23).